A 496-amino-acid chain; its full sequence is Genome polyprotein (496 aa).

Residues Ser-1–Ser-447 are Extracellular-facing. Disulfide bonds link Cys-3–Cys-30, Cys-60–Cys-116, Cys-60–Cys-121, Cys-74–Cys-105, Cys-92–Cys-116, and Cys-92–Cys-121. Residues Asp-98 to Gly-111 are fusion peptide. N-linked (GlcNAc...) asparagine; by host glycosylation occurs at Asn-154. Cystine bridges form between Cys-186-Cys-290 and Cys-307-Cys-338. The helical transmembrane segment at Ile-448–Gly-468 threads the bilayer. At Leu-469–Ser-479 the chain is on the cytoplasmic side. The chain crosses the membrane as a helical span at residues Phe-480–Ala-496.

Homodimer; in the endoplasmic reticulum and Golgi. N-glycosylated.

It localises to the virion membrane. Its subcellular location is the host endoplasmic reticulum membrane. In terms of biological role, binds to host cell surface receptor and mediates fusion between viral and cellular membranes. Envelope protein is synthesized in the endoplasmic reticulum in the form of heterodimer with protein prM. They play a role in virion budding in the ER, and the newly formed immature particle is covered with 60 spikes composed of heterodimer between precursor prM and envelope protein E. The virion is transported to the Golgi apparatus where the low pH causes dissociation of PrM-E heterodimers and formation of E homodimers. prM-E cleavage is ineficient, and many virions are only partially matured. These uncleaved prM would play a role in immune evasion. The chain is Genome polyprotein from Louping ill virus (strain SB 526) (Li).